The primary structure comprises 313 residues: Biotin synthase (313 aa).

Residues 28–258 form the Radical SAM core domain; it reads NFGNDIELCS…LFPQARLRLS (231 aa). Positions 46, 50, and 53 each coordinate [4Fe-4S] cluster. Cys-90, Cys-121, Cys-181, and Arg-256 together coordinate [2Fe-2S] cluster.

The protein belongs to the radical SAM superfamily. Biotin synthase family. As to quaternary structure, homodimer. [4Fe-4S] cluster is required as a cofactor. The cofactor is [2Fe-2S] cluster.

It catalyses the reaction (4R,5S)-dethiobiotin + (sulfur carrier)-SH + 2 reduced [2Fe-2S]-[ferredoxin] + 2 S-adenosyl-L-methionine = (sulfur carrier)-H + biotin + 2 5'-deoxyadenosine + 2 L-methionine + 2 oxidized [2Fe-2S]-[ferredoxin]. The protein operates within cofactor biosynthesis; biotin biosynthesis; biotin from 7,8-diaminononanoate: step 2/2. Functionally, catalyzes the conversion of dethiobiotin (DTB) to biotin by the insertion of a sulfur atom into dethiobiotin via a radical-based mechanism. The polypeptide is Biotin synthase (Francisella tularensis subsp. holarctica (strain FTNF002-00 / FTA)).